Reading from the N-terminus, the 638-residue chain is Chaperone protein HtpG (638 aa).

Residues 1-345 form an a; substrate-binding region; sequence MTTETFEFQV…AQDLSLNVSR (345 aa). A b region spans residues 346–560; that stretch reads EILQQDRHIR…AGELTPALEN (215 aa). A c region spans residues 561–638; that stretch reads MYRAMGQEVP…LMADRLERTL (78 aa).

It belongs to the heat shock protein 90 family. As to quaternary structure, homodimer.

It localises to the cytoplasm. Functionally, molecular chaperone. Has ATPase activity. In Streptomyces coelicolor (strain ATCC BAA-471 / A3(2) / M145), this protein is Chaperone protein HtpG.